Reading from the N-terminus, the 326-residue chain is Vitamin B12 import system permease protein BtuC (326 aa).

9 helical membrane passes run 15-35 (WLLC…CAGE), 61-81 (LAVL…QALF), 88-108 (PGLL…VLLG), 112-132 (LPNW…TLIL), 146-166 (LLAG…AIYF), 184-204 (GGVD…LLWI), 240-260 (GWMV…GLVI), 274-294 (VLLP…DIVA), and 302-322 (ELPI…WLLL).

It belongs to the binding-protein-dependent transport system permease family. FecCD subfamily. As to quaternary structure, the complex is composed of two ATP-binding proteins (BtuD), two transmembrane proteins (BtuC) and a solute-binding protein (BtuF).

The protein resides in the cell inner membrane. Functionally, part of the ABC transporter complex BtuCDF involved in vitamin B12 import. Involved in the translocation of the substrate across the membrane. The polypeptide is Vitamin B12 import system permease protein BtuC (Escherichia coli O9:H4 (strain HS)).